The sequence spans 80 residues: Exodeoxyribonuclease 7 small subunit (80 aa).

The protein belongs to the XseB family. As to quaternary structure, heterooligomer composed of large and small subunits.

It is found in the cytoplasm. It carries out the reaction Exonucleolytic cleavage in either 5'- to 3'- or 3'- to 5'-direction to yield nucleoside 5'-phosphates.. Its function is as follows. Bidirectionally degrades single-stranded DNA into large acid-insoluble oligonucleotides, which are then degraded further into small acid-soluble oligonucleotides. This Pseudomonas putida (strain GB-1) protein is Exodeoxyribonuclease 7 small subunit.